Consider the following 329-residue polypeptide: MEQQKAPQVTYLEVGSLVGHNGFVTSIAVSPENPDTIISSSRDKTVMVWQLTPTDATSPGKAHRSLKGHSHFVQDVVISHDGQFALSGSWDNTLRLWDITKGVSTRLFKGHTQDVMSVAFSSDNRQIISGSRDATIKVWNTLGECKFTLEGPEAHQDWVSCIRFSPNTPTIVSGSWDNKVKIWDIKSFKCNHTLTDHTGYVNTVTISPDGSLCASGGKDTFACLWELSSGKPLYKLEARNTINALAFSPNKYWLSAATDDKIIIWDLLTKQVLAEIVPEVKEQAFDSKKKKESKPKAPACLSLAWSADGSVLYAGYNDGLIRVYKSSSQ.

WD repeat units follow at residues 19–59 (GHNG…ATSP), 68–107 (GHSHFVQDVVISHDGQFALSGSWDNTLRLWDITKGVSTRL), 110–149 (GHTQDVMSVAFSSDNRQIISGSRDATIKVWNTLGECKFTL), 154–193 (AHQDWVSCIRFSPNTPTIVSGSWDNKVKIWDIKSFKCNHT), 196–235 (DHTGYVNTVTISPDGSLCASGGKDTFACLWELSSGKPLYK), 237–275 (EARNTINALAFSPNKYWLSAATDDKIIIWDLLTKQVLAE), and 295–328 (PKAPACLSLAWSADGSVLYAGYNDGLIRVYKSSS).

This sequence belongs to the WD repeat G protein beta family. Ribosomal protein RACK1 subfamily.

This is Small ribosomal subunit protein RACK1 (gpbB) from Dictyostelium discoideum (Social amoeba).